Consider the following 164-residue polypeptide: Peptidyl-prolyl cis-trans isomerase A-like 4G (164 aa).

Positions 7–163 constitute a PPIase cyclophilin-type domain; the sequence is FFDITVDGKP…KKITIADCGQ (157 aa).

It belongs to the cyclophilin-type PPIase family. PPIase A subfamily.

It is found in the cytoplasm. It catalyses the reaction [protein]-peptidylproline (omega=180) = [protein]-peptidylproline (omega=0). PPIases accelerate the folding of proteins. It catalyzes the cis-trans isomerization of proline imidic peptide bonds in oligopeptides. This chain is Peptidyl-prolyl cis-trans isomerase A-like 4G (PPIAL4G), found in Homo sapiens (Human).